The following is a 205-amino-acid chain: Urease accessory protein UreG (205 aa).

Residue 14–21 (GPVGSGKT) participates in GTP binding.

The protein belongs to the SIMIBI class G3E GTPase family. UreG subfamily. In terms of assembly, homodimer. UreD, UreF and UreG form a complex that acts as a GTP-hydrolysis-dependent molecular chaperone, activating the urease apoprotein by helping to assemble the nickel containing metallocenter of UreC. The UreE protein probably delivers the nickel.

It is found in the cytoplasm. Its function is as follows. Facilitates the functional incorporation of the urease nickel metallocenter. This process requires GTP hydrolysis, probably effectuated by UreG. This is Urease accessory protein UreG from Citrobacter koseri (strain ATCC BAA-895 / CDC 4225-83 / SGSC4696).